Reading from the N-terminus, the 748-residue chain is NAD(P)H-quinone oxidoreductase subunit 5, chloroplastic (748 aa).

The next 16 membrane-spanning stretches (helical) occupy residues 9–29 (WIIP…LLLV), 40–60 (WAFP…DLSI), 89–109 (IDPL…MVLV), 121–140 (YLRF…GLVT), 147–167 (IYIF…FWFT), 185–205 (GDFG…SFEF), 224–244 (LFVT…SAQF), 258–278 (TPIS…FLVA), 280–300 (LFPL…IGII), 327–347 (LGYT…FHLI), 354–374 (ALLF…VGYS), 396–416 (TAFL…CFWS), 425–445 (WLYS…TAFY), 551–571 (LLPL…GIPF), 605–625 (FITN…IASL), and 726–746 (YLFL…FLFL).

The protein belongs to the complex I subunit 5 family. As to quaternary structure, NDH is composed of at least 16 different subunits, 5 of which are encoded in the nucleus.

It localises to the plastid. The protein localises to the chloroplast thylakoid membrane. The catalysed reaction is a plastoquinone + NADH + (n+1) H(+)(in) = a plastoquinol + NAD(+) + n H(+)(out). It carries out the reaction a plastoquinone + NADPH + (n+1) H(+)(in) = a plastoquinol + NADP(+) + n H(+)(out). Its function is as follows. NDH shuttles electrons from NAD(P)H:plastoquinone, via FMN and iron-sulfur (Fe-S) centers, to quinones in the photosynthetic chain and possibly in a chloroplast respiratory chain. The immediate electron acceptor for the enzyme in this species is believed to be plastoquinone. Couples the redox reaction to proton translocation, and thus conserves the redox energy in a proton gradient. The polypeptide is NAD(P)H-quinone oxidoreductase subunit 5, chloroplastic (ndhF) (Platanus occidentalis (Sycamore)).